Consider the following 236-residue polypeptide: Ribitol-5-phosphate cytidylyltransferase (236 aa).

CTP is bound by residues 7–10 (LAGG) and 80–86 (GTDRNET).

This sequence belongs to the IspD/TarI cytidylyltransferase family. TarI subfamily.

The enzyme catalyses D-ribitol 5-phosphate + CTP + H(+) = CDP-L-ribitol + diphosphate. It functions in the pathway cell wall biogenesis; poly(ribitol phosphate) teichoic acid biosynthesis. Its function is as follows. Catalyzes the transfer of the cytidylyl group of CTP to D-ribitol 5-phosphate. The protein is Ribitol-5-phosphate cytidylyltransferase of Listeria monocytogenes serovar 1/2a (strain ATCC BAA-679 / EGD-e).